Here is a 261-residue protein sequence, read N- to C-terminus: Carnitinyl-CoA dehydratase (261 aa).

Glutamate 111 serves as the catalytic Nucleophile. Residue glutamate 131 is the Proton acceptor of the active site.

This sequence belongs to the enoyl-CoA hydratase/isomerase family.

It catalyses the reaction (R)-carnitinyl-CoA = crotonobetainyl-CoA + H2O. It functions in the pathway amine and polyamine metabolism; carnitine metabolism. Its function is as follows. Catalyzes the reversible dehydration of L-carnitinyl-CoA to crotonobetainyl-CoA. This Salmonella paratyphi C (strain RKS4594) protein is Carnitinyl-CoA dehydratase.